The following is a 516-amino-acid chain: Ribonuclease Y (516 aa).

Residues 1–21 (MLIKIVIACVITAIIVALIAW) traverse the membrane as a helical segment. Positions 206-269 (TISVVQLPND…ETARIALEKL (64 aa)) constitute a KH domain. In terms of domain architecture, HD spans 332–425 (ALKHSIEVAI…VQAADTISAA (94 aa)).

This sequence belongs to the RNase Y family.

It localises to the cell membrane. Endoribonuclease that initiates mRNA decay. This is Ribonuclease Y from Lachnoclostridium phytofermentans (strain ATCC 700394 / DSM 18823 / ISDg) (Clostridium phytofermentans).